The following is a 151-amino-acid chain: UPF0178 protein Caul_3070 (151 aa).

It belongs to the UPF0178 family.

This Caulobacter sp. (strain K31) protein is UPF0178 protein Caul_3070.